Consider the following 310-residue polypeptide: Thiamine-monophosphate kinase (310 aa).

Mg(2+) is bound by residues aspartate 24, threonine 38, and aspartate 39. Residue aspartate 46 participates in substrate binding. 2 residues coordinate Mg(2+): aspartate 67 and aspartate 115. Residues 114 to 115 (GD) and arginine 138 each bind ATP. Aspartate 203 lines the Mg(2+) pocket. Residue serine 205 coordinates ATP. Residue aspartate 206 coordinates Mg(2+). Substrate is bound by residues glutamate 251 and tryptophan 306.

The protein belongs to the thiamine-monophosphate kinase family.

The catalysed reaction is thiamine phosphate + ATP = thiamine diphosphate + ADP. The protein operates within cofactor biosynthesis; thiamine diphosphate biosynthesis; thiamine diphosphate from thiamine phosphate: step 1/1. Its function is as follows. Catalyzes the ATP-dependent phosphorylation of thiamine-monophosphate (TMP) to form thiamine-pyrophosphate (TPP), the active form of vitamin B1. The protein is Thiamine-monophosphate kinase of Nitrosopumilus maritimus (strain SCM1).